A 102-amino-acid chain; its full sequence is ATP-dependent Clp protease adapter protein ClpS (102 aa).

Belongs to the ClpS family. In terms of assembly, binds to the N-terminal domain of the chaperone ClpA.

Its function is as follows. Involved in the modulation of the specificity of the ClpAP-mediated ATP-dependent protein degradation. This chain is ATP-dependent Clp protease adapter protein ClpS, found in Shewanella denitrificans (strain OS217 / ATCC BAA-1090 / DSM 15013).